The sequence spans 476 residues: uncharacterized protein (476 aa).

Positions 147–204 form a coiled coil; the sequence is DVRLAELRRRRAELEAEIAAVEAGDIAVLDPTAVRDRYQQLSTTARELLSDFREVEEN.

This is an uncharacterized protein from Mycolicibacterium smegmatis (strain ATCC 700084 / mc(2)155) (Mycobacterium smegmatis).